We begin with the raw amino-acid sequence, 105 residues long: uncharacterized protein (105 aa).

The chain crosses the membrane as a helical span at residues 13–35; that stretch reads LLFAFVVVIVVLTLSYVYAQNII.

The protein localises to the membrane. This is an uncharacterized protein from Archaeoglobus fulgidus (strain ATCC 49558 / DSM 4304 / JCM 9628 / NBRC 100126 / VC-16).